A 295-amino-acid chain; its full sequence is Voltage-gated potassium channel (295 aa).

At 1 to 38 the chain is on the cytoplasmic side; that stretch reads MSVERWVFPGCSVMARFRRGLSDLGGRVRNIGDVMEHP. The chain crosses the membrane as a helical span at residues 39 to 63; sequence LVELGVSYAALLSVIVVVVEYTMQL. Topologically, residues 64–67 are extracellular; it reads SGEY. A helical membrane pass occupies residues 68 to 92; the sequence is LVRLYLVDLILVIILWADYAYRAYK. At 93–96 the chain is on the cytoplasmic side; sequence SGDP. Residues 97–105 constitute an intramembrane region (helical); sequence AGYVKKTLY. At 106-108 the chain is on the extracellular side; sequence EIP. A helical; Voltage-sensor membrane pass occupies residues 109 to 125; sequence ALVPAGLLALIEGHLAG. Residues 126-128 are Cytoplasmic-facing; that stretch reads LGL. A helical; Voltage-sensor membrane pass occupies residues 129-145; sequence FRLVRLLRFLRILLIIS. The Cytoplasmic segment spans residues 146-159; that stretch reads RGSKFLSAIADAAD. Residues 160 to 184 traverse the membrane as a helical segment; that stretch reads KIRFYHLFGAVMLTVLYGAFAIYIV. Residues 185–195 lie on the Extracellular side of the membrane; sequence EYPDPNSSIKS. The pore-forming intramembrane region spans 196–208; sequence VFDALWWAVVTAT. Positions 209-214 match the Selectivity filter motif; it reads TVGYGD. Residues 209-221 lie on the Extracellular side of the membrane; the sequence is TVGYGDVVPATPI. A helical transmembrane segment spans residues 222-253; sequence GKVIGIAVMLTGISALTLLIGTVSNMFQKILV. The Cytoplasmic portion of the chain corresponds to 254–295; the sequence is GEPEPSCSPAKLAEMVSSMSEEEFEEFVRTLKNLRRLENSMK.

It belongs to the potassium channel family.

It is found in the cell membrane. Functionally, mediates a strong voltage-dependent potassium ion permeability of excitable membranes. Assuming opened or closed conformations in response to the voltage difference across the membrane, the protein forms a potassium-selective channel through which potassium ions may pass in accordance with their electrochemical gradient. The protein is Voltage-gated potassium channel of Aeropyrum pernix (strain ATCC 700893 / DSM 11879 / JCM 9820 / NBRC 100138 / K1).